We begin with the raw amino-acid sequence, 413 residues long: Putative competence-damage inducible protein (413 aa).

The protein belongs to the CinA family.

This Alkaliphilus oremlandii (strain OhILAs) (Clostridium oremlandii (strain OhILAs)) protein is Putative competence-damage inducible protein.